We begin with the raw amino-acid sequence, 282 residues long: MPNIPTIPLASWIDKLVDGLTQFEGFFNVITNIIGGIVDAFQWVFDLVPPWLFIILLVFGTFWVNRKGKKWGLIIFEVVGLLLIWNLDFWRDMTQTLTLVLTSSLIALVIGVPLGIWMAKSNIVESIFKPVLDFMQTMPAFVYLIPAVAFFGIGMVPGVVASVIFAMPPTVRMTNLGIRQVSTELVEAADSFGSTPWQKLWKVQLPMAKSTMMAGINQSIMLALSMVVIASMIGAMGLGTRVYFAVGRNDAGGGFVAGIAIVIVAIILDRLTQAFNKKAKSE.

6 helical membrane passes run 44-64 (VFDL…TFWV), 70-90 (KWGL…LDFW), 99-119 (LVLT…IWMA), 140-160 (AFVY…PGVV), 220-240 (IMLA…GLGT), and 251-271 (AGGG…LDRL). An ABC transmembrane type-1 domain is found at 93–272 (MTQTLTLVLT…IVAIILDRLT (180 aa)).

It belongs to the binding-protein-dependent transport system permease family. As to quaternary structure, the complex is composed of two ATP-binding proteins (GbuA), two transmembrane proteins (GbuB) and a solute-binding protein (GbuC).

The protein localises to the cell membrane. With respect to regulation, the complex is activated by an osmotic gradient or by low temperature. In terms of biological role, part of the ABC transporter complex GbuABC involved in glycine betaine uptake. Responsible for the translocation of the substrate across the membrane. Involved, with BetL and OpuC, in osmoprotection and cryoprotection of Listeria. Can also uptake carnitine when carnitine is abundant in the growth medium. The polypeptide is Glycine betaine/carnitine transport permease protein GbuB (gbuB) (Listeria monocytogenes serotype 1/2a (strain 10403S)).